The following is a 156-amino-acid chain: Small ribosomal subunit protein uS7 (156 aa).

This sequence belongs to the universal ribosomal protein uS7 family. Part of the 30S ribosomal subunit. Contacts proteins S9 and S11.

Its function is as follows. One of the primary rRNA binding proteins, it binds directly to 16S rRNA where it nucleates assembly of the head domain of the 30S subunit. Is located at the subunit interface close to the decoding center, probably blocks exit of the E-site tRNA. This is Small ribosomal subunit protein uS7 from Rhodospirillum centenum (strain ATCC 51521 / SW).